A 119-amino-acid chain; its full sequence is Chorion class CA protein ERA.3 (119 aa).

An N-terminal signal peptide occupies residues 1–21 (MSYFVVFAICIQACLFHNVYS). The segment at 22 to 55 (QCLGRVGPGGPPLGPYGGPLGGPGYGPVGYGGCG) is left arm. Residues 56–103 (GYGGSGIGNVAVAGELPVVGSSAVMGQVPVIGAVEFAGPACAVGSVSI) form a central domain region. The tract at residues 104–119 (SGACGPTCGCGGLPYY) is right arm.

The protein belongs to the chorion protein family.

This protein is one of many from the eggshell of the silk moth. The protein is Chorion class CA protein ERA.3 (ERA.3) of Bombyx mori (Silk moth).